A 245-amino-acid polypeptide reads, in one-letter code: Protein-L-isoaspartate O-methyltransferase 1 (245 aa).

The active site involves serine 76.

It belongs to the methyltransferase superfamily. L-isoaspartyl/D-aspartyl protein methyltransferase family.

It is found in the cytoplasm. The enzyme catalyses [protein]-L-isoaspartate + S-adenosyl-L-methionine = [protein]-L-isoaspartate alpha-methyl ester + S-adenosyl-L-homocysteine. Its function is as follows. Catalyzes the methyl esterification of L-isoaspartyl residues in peptides and proteins that result from spontaneous decomposition of normal L-aspartyl and L-asparaginyl residues. It plays a role in the repair and/or degradation of damaged proteins. The chain is Protein-L-isoaspartate O-methyltransferase 1 from Rhodopseudomonas palustris (strain HaA2).